The following is a 361-amino-acid chain: Peptide chain release factor 1 (361 aa).

Gln-233 is modified (N5-methylglutamine). The segment covering 280 to 293 has biased composition (basic and acidic residues); the sequence is ERRKKEQERADSRR. A disordered region spans residues 280–307; sequence ERRKKEQERADSRRGQVGSGDRSERIRT.

Belongs to the prokaryotic/mitochondrial release factor family. Methylated by PrmC. Methylation increases the termination efficiency of RF1.

The protein resides in the cytoplasm. Functionally, peptide chain release factor 1 directs the termination of translation in response to the peptide chain termination codons UAG and UAA. In Rickettsia massiliae (strain Mtu5), this protein is Peptide chain release factor 1.